The chain runs to 446 residues: Packaging protein 1 (446 aa).

Residues methionine 1 to arginine 72 form a disordered region. Polar residues predominate over residues leucine 10–proline 21. Over residues histidine 32 to glutamate 43 the composition is skewed to basic and acidic residues. Position 170-177 (glycine 170–serine 177) interacts with ATP. Residues arginine 439–lysine 446 form a DNA-binding region.

This sequence belongs to the adenoviridae packaging protein 1 family. As to quaternary structure, homodimer. Part of a genome packaging complex composed of packaging proteins 1, 2 and 3; this complex specifically binds to the packaging sequence on the left end of viral genomic DNA and performs packaging of the viral genome. Interacts with protein 33K.

It is found in the virion. Its subcellular location is the host nucleus. The protein localises to the host nucleoplasm. It localises to the host nucleolus. Component of the packaging machinery which encapsidates the viral DNA into preformed capsids and transcriptional activator of the viral major late promoter (MLP). Binds, along with packaging proteins 2 and 3, to the specific packaging sequence on the left end of viral genomic DNA and displays ATPase activity thereby providing the power stroke of the packaging machinery. The activity of packaging protein IVa2 is stimulated by protein 33K which acts as a terminase. May be the protein that pumps DNA into the capsid powered by ATP hydrolysis. Specifically binds to the 5'-CG-3' nucleotides of the repeats making up the packaging sequence. Component of the DEF-A and DEF-B transcription factors that bind downstream elements of the major late promoter (MLP), and stimulate transcription from the MLP after initiation of viral DNA replication. DEF-A is a heterodimer packaging proteins 1 and 2 and DEF-B is a homodimer of packaging protein 1. This is Packaging protein 1 from Canine adenovirus serotype 1 (strain CLL) (CAdV-1).